Reading from the N-terminus, the 72-residue chain is Large ribosomal subunit protein bL28 (72 aa).

The protein belongs to the bacterial ribosomal protein bL28 family.

The polypeptide is Large ribosomal subunit protein bL28 (Chlorobium luteolum (strain DSM 273 / BCRC 81028 / 2530) (Pelodictyon luteolum)).